The sequence spans 53 residues: Light-harvesting protein B800/850/890 beta-1 chain (53 aa).

The Cytoplasmic segment spans residues alanine 1–serine 19. Positions 18 and 36 each coordinate a bacteriochlorophyll. A helical transmembrane segment spans residues isoleucine 20–tryptophan 42. Over arginine 43 to glycine 53 the chain is Periplasmic.

The protein belongs to the antenna complex beta subunit family. The core complex is formed by different alpha and beta chains, binding bacteriochlorophyll molecules, and arranged most probably in tetrameric structures disposed around the reaction center. The non-pigmented gamma chains may constitute additional components.

It localises to the cell inner membrane. Its function is as follows. Antenna complexes are light-harvesting systems, which transfer the excitation energy to the reaction centers. The sequence is that of Light-harvesting protein B800/850/890 beta-1 chain from Halorhodospira halophila (strain DSM 244 / SL1) (Ectothiorhodospira halophila (strain DSM 244 / SL1)).